Here is a 438-residue protein sequence, read N- to C-terminus: Anaerobic glycerol-3-phosphate dehydrogenase subunit B (438 aa).

It belongs to the anaerobic G-3-P dehydrogenase subunit B family. In terms of assembly, composed of a catalytic GlpA/B dimer and of membrane bound GlpC. It depends on FMN as a cofactor.

It catalyses the reaction a quinone + sn-glycerol 3-phosphate = dihydroxyacetone phosphate + a quinol. It functions in the pathway polyol metabolism; glycerol degradation via glycerol kinase pathway; glycerone phosphate from sn-glycerol 3-phosphate (anaerobic route): step 1/1. Conversion of glycerol 3-phosphate to dihydroxyacetone. Uses fumarate or nitrate as electron acceptor. The chain is Anaerobic glycerol-3-phosphate dehydrogenase subunit B from Vibrio vulnificus (strain CMCP6).